Consider the following 415-residue polypeptide: MERYRVGGAVRDRLLGRPVDEVDWVVVGATPEAMEAAGYRPVGKDFPVFLHPQTGEEHALARTERKTAVGYHGFEFYAAPEVTLEQDLARRDLTINAMAEDAGGRLIDPFGGQVDLQARQLRHVTDAFAEDPVRILRLARFAARFADDGFVVADETMALCQRMVAAGEVDALVPERVWQELARGLMEPTPRRMIEVLRQAGALARLLPEVDALFGVPQSPAHHPEGDAGTHTLMALDAAAAVDASLEARFAVLLHDVGKALTPAEALPRHPGHEEAGVDGARRVSERLKAPRACRDLAVLVTRWHMHAHRALELRPGTVVELFEGLDLFRRPERLEPFLHACLADDRGRGGREASDWPAGDFLRAAFEACRGVSARSFVEQGLRGPEVGEAVREARCRAVAQVPRPDAGAARDGA.

ATP-binding residues include Gly-8 and Arg-11. Residues Gly-8 and Arg-11 each coordinate CTP. Positions 21 and 23 each coordinate Mg(2+). Positions 91, 137, and 140 each coordinate ATP. CTP-binding residues include Arg-91, Arg-137, and Arg-140. In terms of domain architecture, HD spans Ala-228–Phe-329.

This sequence belongs to the tRNA nucleotidyltransferase/poly(A) polymerase family. Bacterial CCA-adding enzyme type 1 subfamily. Monomer. Can also form homodimers and oligomers. Mg(2+) is required as a cofactor. Ni(2+) serves as cofactor.

It carries out the reaction a tRNA precursor + 2 CTP + ATP = a tRNA with a 3' CCA end + 3 diphosphate. The enzyme catalyses a tRNA with a 3' CCA end + 2 CTP + ATP = a tRNA with a 3' CCACCA end + 3 diphosphate. Functionally, catalyzes the addition and repair of the essential 3'-terminal CCA sequence in tRNAs without using a nucleic acid template. Adds these three nucleotides in the order of C, C, and A to the tRNA nucleotide-73, using CTP and ATP as substrates and producing inorganic pyrophosphate. tRNA 3'-terminal CCA addition is required both for tRNA processing and repair. Also involved in tRNA surveillance by mediating tandem CCA addition to generate a CCACCA at the 3' terminus of unstable tRNAs. While stable tRNAs receive only 3'-terminal CCA, unstable tRNAs are marked with CCACCA and rapidly degraded. This chain is Multifunctional CCA protein, found in Halorhodospira halophila (strain DSM 244 / SL1) (Ectothiorhodospira halophila (strain DSM 244 / SL1)).